Reading from the N-terminus, the 493-residue chain is Glycosyltransferase alg8 (493 aa).

4 consecutive transmembrane segments (helical) span residues 13–32 (GWLFYLSLLMGLAAALPTSI), 47–69 (VGIWRYSMGITHFVRGMIFLYIV), 380–402 (LTVAIIASFKYGGAFLLMYLLWI), and 422–444 (PAYPMILYYNQIVGALMKIYVFF).

Belongs to the glycosyltransferase 2 family.

It localises to the cell membrane. It participates in glycan biosynthesis; alginate biosynthesis. Possibly a processive enzyme that polymerizes GDP-mannuronic acid. The polypeptide is Glycosyltransferase alg8 (alg8) (Pseudomonas syringae pv. tomato (strain ATCC BAA-871 / DC3000)).